Reading from the N-terminus, the 182-residue chain is Transcription termination/antitermination protein NusG (182 aa).

Residues 131–161 enclose the KOW domain; the sequence is GEVVRVNEGPFADFNGTVEEVDYEKSRLKVS.

It belongs to the NusG family.

In terms of biological role, participates in transcription elongation, termination and antitermination. The protein is Transcription termination/antitermination protein NusG of Vibrio parahaemolyticus serotype O3:K6 (strain RIMD 2210633).